The chain runs to 66 residues: MKLIHVLAALPFIGILLGIPFANKVTPYVFGMPFILAYIVMWALLTSALMAIVYVLDKENKKEEAE.

The next 2 membrane-spanning stretches (helical) occupy residues 3–23 (LIHV…PFAN) and 34–54 (FILA…AIVY).

The protein resides in the cell membrane. This is an uncharacterized protein from Bacillus subtilis (strain 168).